Reading from the N-terminus, the 139-residue chain is ATP synthase epsilon chain (139 aa).

It belongs to the ATPase epsilon chain family. As to quaternary structure, F-type ATPases have 2 components, CF(1) - the catalytic core - and CF(0) - the membrane proton channel. CF(1) has five subunits: alpha(3), beta(3), gamma(1), delta(1), epsilon(1). CF(0) has three main subunits: a, b and c.

Its subcellular location is the cell inner membrane. Its function is as follows. Produces ATP from ADP in the presence of a proton gradient across the membrane. The protein is ATP synthase epsilon chain of Escherichia coli O139:H28 (strain E24377A / ETEC).